A 689-amino-acid chain; its full sequence is Long-chain-fatty-acid--CoA ligase 2 (689 aa).

Residue 252–263 (YTSGSTGKPKGV) coordinates ATP. The short motif at 518 to 567 (DGWFKTGDVGEIAKGNTLRLIDRKKNIVKSLNGEYIALEKIEAQFFTSPL) is the FACS element.

The protein belongs to the ATP-dependent AMP-binding enzyme family. Requires Mg(2+) as cofactor.

The protein resides in the golgi apparatus. The protein localises to the vacuole membrane. It catalyses the reaction a long-chain fatty acid + ATP + CoA = a long-chain fatty acyl-CoA + AMP + diphosphate. Esterification, concomitant with transport, of endogenous long-chain fatty acids into metabolically active CoA thioesters for subsequent degradation or incorporation into phospholipids. Plays an important role in the determination of viability in the stationary phase. This chain is Long-chain-fatty-acid--CoA ligase 2 (lcf2), found in Schizosaccharomyces pombe (strain 972 / ATCC 24843) (Fission yeast).